Here is a 481-residue protein sequence, read N- to C-terminus: MPSNPNRSIYDFYNITDIIGEGTFSTVTLANHIEKIEDKYAIKIISKEVLDNERRTYVDWEISILSKCQHPNIIKFYEHYESDEDICLVLEWIPNGDLFDRIVKKGVFNEEEARLTMKSLLSAVEYLHDKSVVHRDIKPENILFSDSYGGIKLGDFGLAKFYEESIGLELACGTLAYSAPEITNNQVYRKSVDMWSCGCILYFILFGRPPFYSDDESEMFELITKGQWEFPSKTQHKYSDQVKDLIKLLLENDPNKRLTVKQSLAHKWIQSIDERSFSSVIKQSPLITSQQQQQQSPSSLLSSSSSSTASSPSLKPLSPLVAIIEQQEYNYNHQQLQNHNILHSSNSHSRHHHASSANSTTVDQQQEEDNNHHYHRHNSNNNINNNNDNNDNNNSNSNNSNNNINNFINNNNNNNNNNSNFFDDDDEIDINQNEMDDIDDEQQQPTNSLRSSSKPIAIKKSQIRTSLNGNIDIKRGVLTPL.

A Protein kinase domain is found at 13-269; sequence YNITDIIGEG…VKQSLAHKWI (257 aa). ATP contacts are provided by residues 19 to 27 and Lys-43; that span reads IGEGTFSTV. Residue Asp-136 is the Proton acceptor of the active site. Disordered regions lie at residues 285 to 315 and 345 to 427; these read PLITSQQQQQQSPSSLLSSSSSSTASSPSLK and SNSH…DDDE. Low complexity predominate over residues 379 to 421; the sequence is SNNNINNNNDNNDNNNSNSNNSNNNINNFINNNNNNNNNNSNF.

Belongs to the protein kinase superfamily. CAMK Ser/Thr protein kinase family. CaMK subfamily.

It carries out the reaction L-seryl-[myosin light chain] + ATP = O-phospho-L-seryl-[myosin light chain] + ADP + H(+). The enzyme catalyses L-threonyl-[myosin light chain] + ATP = O-phospho-L-threonyl-[myosin light chain] + ADP + H(+). With respect to regulation, does not have a calmodulin-binding domain. Its function is as follows. May phosphorylate a specific serine in the N-terminus of a myosin light chain. This is Probable myosin light chain kinase DDB_G0284661 from Dictyostelium discoideum (Social amoeba).